A 374-amino-acid chain; its full sequence is Protein-glutamate methylesterase/protein-glutamine glutaminase (374 aa).

One can recognise a Response regulatory domain in the interval 4 to 121 (KVLVVDDSGF…SRNPDKVKQM (118 aa)). Aspartate 55 carries the post-translational modification 4-aspartylphosphate. The tract at residues 144–186 (PVAAPVPASSPAPASSFASPAPARPAATARAAAPAASHSPAPK) is disordered. Low complexity predominate over residues 154–183 (PAPASSFASPAPARPAATARAAAPAASHSP). Positions 183–374 (PAPKRKPYKL…IGKHLVEACV (192 aa)) constitute a CheB-type methylesterase domain. Residues serine 198, histidine 225, and aspartate 318 contribute to the active site.

This sequence belongs to the CheB family. In terms of processing, phosphorylated by CheA. Phosphorylation of the N-terminal regulatory domain activates the methylesterase activity.

The protein resides in the cytoplasm. The catalysed reaction is [protein]-L-glutamate 5-O-methyl ester + H2O = L-glutamyl-[protein] + methanol + H(+). The enzyme catalyses L-glutaminyl-[protein] + H2O = L-glutamyl-[protein] + NH4(+). Involved in chemotaxis. Part of a chemotaxis signal transduction system that modulates chemotaxis in response to various stimuli. Catalyzes the demethylation of specific methylglutamate residues introduced into the chemoreceptors (methyl-accepting chemotaxis proteins or MCP) by CheR. Also mediates the irreversible deamidation of specific glutamine residues to glutamic acid. This Pseudomonas putida (Arthrobacter siderocapsulatus) protein is Protein-glutamate methylesterase/protein-glutamine glutaminase.